Consider the following 887-residue polypeptide: 3-hydroxy-3-methylglutaryl-coenzyme A reductase (887 aa).

At M1–H9 the chain is on the cytoplasmic side. Residues G10–G39 form a helical membrane-spanning segment. Over N40–D56 the chain is Lumenal. Residues V57–F78 form a helical membrane-spanning segment. Positions D61 to L218 constitute an SSD domain. An INSIG-binding motif motif is present at residues Y75–F78. Residues Q79 to K89 lie on the Cytoplasmic side of the membrane. K89 participates in a covalent cross-link: Glycyl lysine isopeptide (Lys-Gly) (interchain with G-Cter in ubiquitin). The helical transmembrane segment at Y90–L114 threads the bilayer. Residues D115–E123 are Lumenal-facing. The chain crosses the membrane as a helical span at residues A124–S149. Residues Q150–R159 lie on the Cytoplasmic side of the membrane. Residues G160–V187 traverse the membrane as a helical segment. The Lumenal portion of the chain corresponds to R188–E191. The chain crosses the membrane as a helical span at residues I192 to L220. Over E221 to K248 the chain is Cytoplasmic. K248 is covalently cross-linked (Glycyl lysine isopeptide (Lys-Gly) (interchain with G-Cter in ubiquitin)). A helical transmembrane segment spans residues P249–A275. The Lumenal segment spans residues D276–K314. An N-linked (GlcNAc...) asparagine glycan is attached at N281. The chain crosses the membrane as a helical span at residues M315–F339. The Cytoplasmic portion of the chain corresponds to E340 to A887. Catalysis depends on charge relay system residues E558, K690, and D766. The Proton donor role is filled by H865. S871 carries the post-translational modification Phosphoserine; by AMPK.

It belongs to the HMG-CoA reductase family. Homotetramer. Homodimer. Interacts (via its SSD) with INSIG1; the interaction, accelerated by sterols, leads to the recruitment of HMGCR to AMFR/gp78 for its ubiquitination by the sterol-mediated ERAD pathway. Interacts with UBIAD1. Post-translationally, undergoes sterol-mediated ubiquitination and ER-associated degradation (ERAD). Accumulation of sterols in the endoplasmic reticulum (ER) membrane, triggers binding of the reductase to the ER membrane protein INSIG1 or INSIG2. The INSIG1 binding leads to the recruitment of the ubiquitin ligase, AMFR/gp78, RNF139 or RNF145, initiating ubiquitination of the reductase. The ubiquitinated reductase is then extracted from the ER membrane and delivered to cytosolic 26S proteosomes by a mechanism probably mediated by the ATPase Valosin-containing protein VCP/p97. The INSIG2-binding leads to the recruitment of the ubiquitin ligase RNF139, initiating ubiquitination of the reductase. Lys-248 is the main site of ubiquitination. Ubiquitination is enhanced by the presence of a geranylgeranylated protein. N-glycosylated. Deglycosylated by NGLY1 on release from the endoplasmic reticulum (ER) in a sterol-mediated manner. In terms of processing, phosphorylated. Phosphorylation at Ser-871 reduces the catalytic activity.

The protein localises to the endoplasmic reticulum membrane. The protein resides in the peroxisome membrane. The catalysed reaction is (R)-mevalonate + 2 NADP(+) + CoA = (3S)-3-hydroxy-3-methylglutaryl-CoA + 2 NADPH + 2 H(+). The protein operates within metabolic intermediate biosynthesis; (R)-mevalonate biosynthesis; (R)-mevalonate from acetyl-CoA: step 3/3. Regulated by a negative feedback mechanism through sterols and non-sterol metabolites derived from mevalonate. Phosphorylation at Ser-871 down-regulates the catalytic activity. In terms of biological role, catalyzes the conversion of (3S)-hydroxy-3-methylglutaryl-CoA (HMG-CoA) to mevalonic acid, the rate-limiting step in the synthesis of cholesterol and other isoprenoids, thus plays a critical role in cellular cholesterol homeostasis. This Rattus norvegicus (Rat) protein is 3-hydroxy-3-methylglutaryl-coenzyme A reductase (Hmgcr).